A 544-amino-acid polypeptide reads, in one-letter code: Chaperonin GroEL (544 aa).

Residues 30–33 (TLGP), K51, 87–91 (DGTTT), G415, and D495 each bind ATP.

This sequence belongs to the chaperonin (HSP60) family. In terms of assembly, forms a cylinder of 14 subunits composed of two heptameric rings stacked back-to-back. Interacts with the co-chaperonin GroES.

It is found in the cytoplasm. The enzyme catalyses ATP + H2O + a folded polypeptide = ADP + phosphate + an unfolded polypeptide.. Together with its co-chaperonin GroES, plays an essential role in assisting protein folding. The GroEL-GroES system forms a nano-cage that allows encapsulation of the non-native substrate proteins and provides a physical environment optimized to promote and accelerate protein folding. In Neisseria gonorrhoeae (strain ATCC 700825 / FA 1090), this protein is Chaperonin GroEL.